We begin with the raw amino-acid sequence, 199 residues long: MVVIEKNRKSAISRKTTETDIQLELNLDGAGQHLIDTGVPFLNHMLTLFSVHGFLDLSLRAEGDIDIDDHHTTEDIGIVLGQAIAQALGNKGGISRYASVYLPMDEALVRIVIDLSNRPYLHYNAPVIEQKLGTFDSCLVKEFFRAVSQQAGMTLHIDMIHGENGHHIVEAIFKGFGRALSLAIEPLGTDGALSSKGCL.

The protein belongs to the imidazoleglycerol-phosphate dehydratase family.

The protein localises to the cytoplasm. It carries out the reaction D-erythro-1-(imidazol-4-yl)glycerol 3-phosphate = 3-(imidazol-4-yl)-2-oxopropyl phosphate + H2O. Its pathway is amino-acid biosynthesis; L-histidine biosynthesis; L-histidine from 5-phospho-alpha-D-ribose 1-diphosphate: step 6/9. The chain is Imidazoleglycerol-phosphate dehydratase from Desulfotalea psychrophila (strain LSv54 / DSM 12343).